Here is a 452-residue protein sequence, read N- to C-terminus: Bone morphogenetic protein 5 (452 aa).

The signal sequence occupies residues 1-25; sequence MHWTVFLLRGIVGFLWSGWVQVGYA. Residues 26 to 314 constitute a propeptide that is removed on maturation; sequence KGGLGDNHVH…ASEVLLRSVR (289 aa). N-linked (GlcNAc...) asparagine glycans are attached at residues asparagine 209, asparagine 325, asparagine 343, and asparagine 393. The tract at residues 316–345 is disordered; sequence ASKRKNQNRNKSNSHQDPSRMPSAGDYNTS. Intrachain disulfides connect cysteine 351–cysteine 417, cysteine 380–cysteine 449, and cysteine 384–cysteine 451.

This sequence belongs to the TGF-beta family. In terms of assembly, interacts with ERFE; the interaction inhibits BMP-induced transcription of HAMP.

It is found in the secreted. Growth factor of the TGF-beta superfamily that plays essential roles in many developmental processes, including cartilage and bone formation or neurogenesis. Initiates the canonical BMP signaling cascade by associating with type I receptor BMPR1A and type II receptor BMPR2. In turn, BMPR1A propagates signal by phosphorylating SMAD1/5/8 that travel to the nucleus and act as activators and repressors of transcription of target genes. Can also signal through non-canonical pathway such as MAPK p38 signaling cascade to promote chondrogenic differentiation. Promotes the expression of HAMP, this is repressed by its interaction with ERFE. This Mus musculus (Mouse) protein is Bone morphogenetic protein 5 (Bmp5).